The sequence spans 527 residues: MSLAEAISLWNEGVLAADKKDWKGALDAFTGVQDPHSRICFNVGCIYTILGNLPEAEKAFTKSINRDKHLAVSYFQRGMLYYQMEKYDSAIKDLKEALTQLRGNQLIDYKILGLQFKLFACEVLYNIAFMYAKREEWKKAEEHLALAVSMKSEPRHSKIDRAMESVWKQKLYEPVVIPVGRLFRPNEKQVAQLVKKDYLGKATVVASVVDQDSFSGFAPLQPQAAEPPPRPKTPEIFRALEGEAHRVLFGFVPETPEELQVMPGNIVFVLKKGNDNWATVMFNGQKGLVPCNYLEPVELRIHPQQQPQEETSLESDIPAPPSSSAPGRPQLSPGQKGKEEPKQEIKLSVPKSYTLKVHYKYTVVMETQFRLPYSQVRDMVAKKLDLLPEHTKLSYRRQDSNELVPLSEFSMKDAWAQVKNYCLTLWCENTVGDQGFPDEPEESKKSDANNQTTEPELKEGSKVVALFSYEATQPEDLEFLEGDVILVISTVNEQWLEGECKGKVGIFPKAFVEQHPTTDLESTPGRV.

TPR repeat units follow at residues 37-70, 71-104, and 121-154; these read SRIC…DKHL, AVSY…LRGN, and CEVL…KSEP. A Phosphothreonine modification is found at T233. The region spanning 240–299 is the SH3 1 domain; that stretch reads LEGEAHRVLFGFVPETPEELQVMPGNIVFVLKKGNDNWATVMFNGQKGLVPCNYLEPVEL. The disordered stretch occupies residues 304 to 345; that stretch reads QQQPQEETSLESDIPAPPSSSAPGRPQLSPGQKGKEEPKQEI. At S324 the chain carries Phosphoserine. Residues 336-345 show a composition bias toward basic and acidic residues; that stretch reads KGKEEPKQEI. Positions 352-430 constitute a PB1 domain; the sequence is SYTLKVHYKY…YCLTLWCENT (79 aa). S400 is modified (phosphoserine). Residues 434–457 are disordered; sequence QGFPDEPEESKKSDANNQTTEPEL. Residues 458–517 form the SH3 2 domain; it reads KEGSKVVALFSYEATQPEDLEFLEGDVILVISTVNEQWLEGECKGKVGIFPKAFVEQHPT.

It belongs to the NCF2/NOXA1 family. In terms of assembly, component of the phagocyte NADPH oxidase complex composed of an obligatory core heterodimer formed by the membrane proteins CYBA and CYBB and the cytosolic regulatory subunits NCF1/p47-phox, NCF2/p67-phox, NCF4/p40-phox and the small GTPase RAC1 or RAC2. Part of a cytosolic complex composed at least by NCF1, NCF2 and NCF4. Interacts with NCF4. Interacts (via the C-terminal SH3 domain) with NCF1 (via C-terminus). Interacts with SYTL1 and RAC1. May interact with NOXO1. Interacts with S100A8 and calprotectin (S100A8/9). Interacts with GBP7 (via GB1/RHD3-type G domain). Interacts with CYBB; the interaction is enhanced in the presence of GBP7.

The protein localises to the cytoplasm. Subunit of the phagocyte NADPH oxidase complex that mediates the transfer of electrons from cytosolic NADPH to O2 to produce the superoxide anion (O2(-)). In the activated complex, electrons are first transferred from NADPH to flavin adenine dinucleotide (FAD) and subsequently transferred via two heme molecules to molecular oxygen, producing superoxide through an outer-sphere reaction. Activation of the NADPH oxidase complex is initiated by the assembly of cytosolic subunits of the NADPH oxidase complex with the core NADPH oxidase complex to form a complex at the plasma membrane or phagosomal membrane. This activation process is initiated by phosphorylation dependent binding of the cytosolic NCF1/p47-phox subunit to the C-terminus of CYBA/p22-phox. This chain is Neutrophil cytosol factor 2, found in Bos taurus (Bovine).